Reading from the N-terminus, the 156-residue chain is ATP synthase subunit b (156 aa).

The chain crosses the membrane as a helical span at residues 7–27 (LIGQLIAFALFVAFCMKFVWP).

Belongs to the ATPase B chain family. In terms of assembly, F-type ATPases have 2 components, F(1) - the catalytic core - and F(0) - the membrane proton channel. F(1) has five subunits: alpha(3), beta(3), gamma(1), delta(1), epsilon(1). F(0) has three main subunits: a(1), b(2) and c(10-14). The alpha and beta chains form an alternating ring which encloses part of the gamma chain. F(1) is attached to F(0) by a central stalk formed by the gamma and epsilon chains, while a peripheral stalk is formed by the delta and b chains.

The protein localises to the cell inner membrane. F(1)F(0) ATP synthase produces ATP from ADP in the presence of a proton or sodium gradient. F-type ATPases consist of two structural domains, F(1) containing the extramembraneous catalytic core and F(0) containing the membrane proton channel, linked together by a central stalk and a peripheral stalk. During catalysis, ATP synthesis in the catalytic domain of F(1) is coupled via a rotary mechanism of the central stalk subunits to proton translocation. Its function is as follows. Component of the F(0) channel, it forms part of the peripheral stalk, linking F(1) to F(0). In Actinobacillus pleuropneumoniae serotype 5b (strain L20), this protein is ATP synthase subunit b.